The chain runs to 346 residues: Phosphoribosylformylglycinamidine cyclo-ligase (346 aa).

The protein belongs to the AIR synthase family.

Its subcellular location is the cytoplasm. It carries out the reaction 2-formamido-N(1)-(5-O-phospho-beta-D-ribosyl)acetamidine + ATP = 5-amino-1-(5-phospho-beta-D-ribosyl)imidazole + ADP + phosphate + H(+). Its pathway is purine metabolism; IMP biosynthesis via de novo pathway; 5-amino-1-(5-phospho-D-ribosyl)imidazole from N(2)-formyl-N(1)-(5-phospho-D-ribosyl)glycinamide: step 2/2. This is Phosphoribosylformylglycinamidine cyclo-ligase from Geobacillus kaustophilus (strain HTA426).